The primary structure comprises 186 residues: dCTP deaminase, dUMP-forming (186 aa).

DCTP is bound by residues Arg-101–Arg-106, Asp-119, Thr-127–Glu-129, Gln-148, Tyr-162, and Gln-171. Catalysis depends on Glu-129, which acts as the Proton donor/acceptor.

It belongs to the dCTP deaminase family. As to quaternary structure, homotrimer.

It catalyses the reaction dCTP + 2 H2O = dUMP + NH4(+) + diphosphate. Its pathway is pyrimidine metabolism; dUMP biosynthesis; dUMP from dCTP: step 1/1. Bifunctional enzyme that catalyzes both the deamination of dCTP to dUTP and the hydrolysis of dUTP to dUMP without releasing the toxic dUTP intermediate. In Coprothermobacter proteolyticus (strain ATCC 35245 / DSM 5265 / OCM 4 / BT), this protein is dCTP deaminase, dUMP-forming.